Consider the following 679-residue polypeptide: DNA ligase (679 aa).

Residues 86–90 (DEAYD) and 129–130 (ST) each bind NAD(+). K167 serves as the catalytic N6-AMP-lysine intermediate. The NAD(+) site is built by R183, E214, and K326. Zn(2+) is bound by residues C417, C420, C433, and C439. Residues 599–679 (GEKSPISGKT…EAYRQLVSLD (81 aa)) form the BRCT domain.

Belongs to the NAD-dependent DNA ligase family. LigA subfamily. Mg(2+) is required as a cofactor. Mn(2+) serves as cofactor.

It catalyses the reaction NAD(+) + (deoxyribonucleotide)n-3'-hydroxyl + 5'-phospho-(deoxyribonucleotide)m = (deoxyribonucleotide)n+m + AMP + beta-nicotinamide D-nucleotide.. Functionally, DNA ligase that catalyzes the formation of phosphodiester linkages between 5'-phosphoryl and 3'-hydroxyl groups in double-stranded DNA using NAD as a coenzyme and as the energy source for the reaction. It is essential for DNA replication and repair of damaged DNA. The polypeptide is DNA ligase (Desulfotalea psychrophila (strain LSv54 / DSM 12343)).